A 536-amino-acid polypeptide reads, in one-letter code: Hydroxylamine oxidoreductase (536 aa).

The N-terminal stretch at 1–26 (MFEIFKKPLSRIVGATFAFAGVTLLA) is a signal peptide. Residues cysteine 116, cysteine 119, histidine 120, histidine 136, cysteine 160, cysteine 163, histidine 164, histidine 168, cysteine 179, cysteine 182, histidine 183, histidine 198, cysteine 223, cysteine 226, histidine 227, cysteine 234, cysteine 237, histidine 238, histidine 241, cysteine 254, cysteine 257, and histidine 258 each coordinate heme c. Hydroxylamine is bound at residue histidine 263. Heme c-binding residues include histidine 274, cysteine 301, cysteine 304, histidine 305, histidine 311, cysteine 346, cysteine 349, histidine 350, histidine 443, and tyrosine 451.

As to quaternary structure, homotrimer; subunits are linked by two covalent bonds between Tyr-451 of one subunit and heme P460 of an adjacent subunit. Requires heme c as cofactor.

It localises to the anammoxosome. It carries out the reaction hydroxylamine + 3 Fe(III)-[cytochrome c] = nitric oxide + 3 Fe(II)-[cytochrome c] + 3 H(+). Catalyzes the oxidation of hydroxylamine to nitric oxide with cytochrome c acting as an electron acceptor. Does not oxidize hydroxylamine to nitrite. Also able to catalyze the four-electron oxidation of hydrazine to N(2) in vitro with reduced efficiency; however, this reaction is probably not physiological. The chain is Hydroxylamine oxidoreductase from Kuenenia stuttgartiensis.